A 941-amino-acid polypeptide reads, in one-letter code: Pre-mRNA-processing factor 6 (941 aa).

The tract at residues 1–79 (MNKKKKPFLG…DEDLNDTNYD (79 aa)) is disordered. A compositionally biased stretch (basic and acidic residues) spans 39–65 (DANDPVDDRHAPPGKRTVGDQMKKNQA). Acidic residues predominate over residues 66–78 (ADDDDEDLNDTNY). Position 143 is a phosphoserine (serine 143). Phosphothreonine is present on residues threonine 180, threonine 266, and threonine 275. Serine 279 carries the phosphoserine modification. HAT repeat units follow at residues 384–416 (TDIR…LEEP), 418–444 (DARI…ARLE), 445–476 (TYEN…LEEA), 554–586 (NALE…FEKN), 588–620 (GTRE…SKWL), 622–654 (GDVP…LESE), 689–721 (GNIT…IEEQ), 723–755 (ELME…LEEK), and 855–887 (RKIT…FELQ).

In terms of assembly, identified in the spliceosome B complex. Identified in the spliceosome C complex. Associates with the U5 snRNP particle. Component of the U4/U6-U5 tri-snRNP complex composed of the U4, U6 and U5 snRNAs and at least PRPF3, PRPF4, PRPF6, PRPF8, PRPF31, SNRNP200, TXNL4A, SNRNP40, DDX23, CD2BP2, PPIH, SNU13, EFTUD2, SART1 and USP39, LSm proteins LSm2-8 and Sm proteins. Interacts with ARAF1. Interacts with AR and NR3C1, but not ESR1, independently of the presence of hormones. Interacts with USH1G. Phosphorylated by PRP4K during spliceosome assembly.

Its subcellular location is the nucleus. It is found in the nucleoplasm. The protein resides in the nucleus speckle. Functionally, involved in pre-mRNA splicing as component of the U4/U6-U5 tri-snRNP complex, one of the building blocks of the spliceosome. Enhances dihydrotestosterone-induced transactivation activity of AR, as well as dexamethasone-induced transactivation activity of NR3C1, but does not affect estrogen-induced transactivation. The chain is Pre-mRNA-processing factor 6 (Prpf6) from Rattus norvegicus (Rat).